Here is a 225-residue protein sequence, read N- to C-terminus: Small ribosomal subunit protein uS3 (225 aa).

One can recognise a KH type-2 domain in the interval V16–K85. The interval G200 to S225 is disordered. Basic and acidic residues predominate over residues E208 to R217.

The protein belongs to the universal ribosomal protein uS3 family. As to quaternary structure, part of the 30S ribosomal subunit.

Its function is as follows. Binds the lower part of the 30S subunit head. The polypeptide is Small ribosomal subunit protein uS3 (Thermoplasma volcanium (strain ATCC 51530 / DSM 4299 / JCM 9571 / NBRC 15438 / GSS1)).